We begin with the raw amino-acid sequence, 1361 residues long: Zinc finger protein GLI4 (1361 aa).

The disordered stretch occupies residues S185–L270. 2 stretches are compositionally biased toward polar residues: residues T198 to T208 and N227 to Q241. C2H2-type zinc fingers lie at residues T289–H314, F322–H349, H355–H379, Y385–H410, and Y416–H441. Disordered regions lie at residues R434–I527, S556–E584, N647–L720, N787–S832, Q906–A946, and D1134–N1230. The span at S475–M502 shows a compositional bias: basic and acidic residues. Residues S506 to G522 show a composition bias toward low complexity. The span at Q573–E584 shows a compositional bias: basic and acidic residues. Residues T653–S670 are compositionally biased toward low complexity. Polar residues-rich tracts occupy residues Y672–D695 and E710–L720. The segment covering R805–L821 has biased composition (basic and acidic residues). 2 stretches are compositionally biased toward polar residues: residues Q913–E939 and Y1142–A1164. The segment covering P1172–R1183 has biased composition (pro residues).

Belongs to the GLI C2H2-type zinc-finger protein family.

Its subcellular location is the nucleus. Its function is as follows. Has an essential role in the early embryonic patterning of mesoderm and neuroectoderm. This Xenopus laevis (African clawed frog) protein is Zinc finger protein GLI4 (gli4).